The chain runs to 718 residues: Sodium/myo-inositol cotransporter (718 aa).

Topologically, residues 1 to 9 (MRAVLETAD) are extracellular. Residues 10 to 29 (IAIVALYFILVMCIGFFAMW) traverse the membrane as a helical segment. Residues 30-38 (KSNRSTVSG) lie on the Cytoplasmic side of the membrane. Residues 39-57 (YFLAGRSMTWVAIGASLFV) form a helical membrane-spanning segment. At 58 to 86 (SNIGSEHFIGLAGSGAASGFAVGAWEFNA) the chain is on the extracellular side. Residues 87 to 110 (LLLLQLLGWVFIPIYIRSGVYTMP) form a helical membrane-spanning segment. Over 111-123 (EYLSKRFGGHRIQ) the chain is Cytoplasmic. Residues 124 to 144 (VYFAALSLILYIFTKLSVDLY) traverse the membrane as a helical segment. Topologically, residues 145-157 (SGALFIQESLGWN) are extracellular. Residues 158-183 (LYVSVILLIGMTALLTVTGGLVAVIY) form a helical membrane-spanning segment. At 184 to 186 (TDT) the chain is on the cytoplasmic side. The helical transmembrane segment at 187–205 (LQALLMIVGALTLMIISMM) threads the bilayer. Topologically, residues 206-303 (EIGGFEEVKR…HAKGSTLMAG (98 aa)) are extracellular. The N-linked (GlcNAc...) asparagine glycan is linked to Asn232. Residues 304–324 (FLKLLPMFIIVVPGMISRILF) form a helical membrane-spanning segment. The Cytoplasmic portion of the chain corresponds to 325 to 353 (ADDIACINPEHCMQVCGSRAGCSNIAYPR). A helical transmembrane segment spans residues 354 to 376 (LVMKLVPVGLRGLMMAVMIAALM). Over 377–406 (SDLDSIFNSASTIFTLDVYKLIRRSASSRE) the chain is Extracellular. Residues 407-430 (LMIVGRIFVAFMVVISIAWVPIIV) form a helical membrane-spanning segment. The Cytoplasmic portion of the chain corresponds to 431-443 (EMQGGQMYLYIQE). The chain crosses the membrane as a helical span at residues 444–462 (VADYLTPPVAALFLLAIFW). Residues 463-510 (KRCNEQGAFYGGMAGFVLGAVRLTLAFAYRAPECDQPDNRPGFIKDIH) lie on the Extracellular side of the membrane. A helical transmembrane segment spans residues 511–532 (YMYVATALFWVTGLITVIVSLL). At 533-695 (TPPPTKEQIR…QMLEEPPQVK (163 aa)) the chain is on the cytoplasmic side. 2 positions are modified to phosphoserine: Ser594 and Ser632. Residues 696–716 (LILNIGLFAVCSLGIFMFVYF) form a helical membrane-spanning segment. Topologically, residues 717 to 718 (SL) are extracellular.

It belongs to the sodium:solute symporter (SSF) (TC 2.A.21) family. As to quaternary structure, interacts with KCNQ2 (via the pore module). Interacts with KCNQ1; this interaction is direct. Forms coregulatory complexes with ion channels KCNQ2-KCNQ3 and KCNQ1-KCNE2. As to expression, kidney cortex and medulla.

The protein localises to the apical cell membrane. The protein resides in the basolateral cell membrane. The catalysed reaction is myo-inositol(out) + 2 Na(+)(out) = myo-inositol(in) + 2 Na(+)(in). It carries out the reaction scyllo-inositol(out) + 2 Na(+)(out) = scyllo-inositol(in) + 2 Na(+)(in). Inhibited by phlorizin and phloretin. Electrogenic Na(+)-coupled sugar symporter that actively transports myo-inositol and its stereoisomer scyllo-inositol across the plasma membrane, with a Na(+) to sugar coupling ratio of 2:1. Maintains myo-inositol concentration gradient that defines cell volume and fluid balance during osmotic stress, in particular in the fetoplacental unit and central nervous system. Forms coregulatory complexes with voltage-gated K(+) ion channels, allosterically altering ion selectivity, voltage dependence and gating kinetics of the channel. In turn, K(+) efflux through the channel forms a local electrical gradient that modulates electrogenic Na(+)-coupled myo-inositol influx through the transporter. Associates with KCNQ1-KCNE2 channel in the apical membrane of choroid plexus epithelium and regulates the myo-inositol gradient between blood and cerebrospinal fluid with an impact on neuron excitability. Associates with KCNQ2-KCNQ3 channel altering ion selectivity, increasing Na(+) and Cs(+) permeation relative to K(+) permeation. Provides myo-inositol precursor for biosynthesis of phosphoinositides such as PI(4,5)P2, thus indirectly affecting the activity of phosphoinositide-dependent ion channels and Ca(2+) signaling upon osmotic stress. Has very low affinity for sugars such as L-fucose and L-xylose, with an affinity about three orders of magnitude lower than myo-inositol. This chain is Sodium/myo-inositol cotransporter (SLC5A3), found in Canis lupus familiaris (Dog).